Here is a 232-residue protein sequence, read N- to C-terminus: Ribonuclease 3 (232 aa).

The RNase III domain maps to 7–135; that stretch reads IQAVESKLKF…ILGAVYLDGG (129 aa). Glutamate 48 is a Mg(2+) binding site. Aspartate 52 is an active-site residue. 2 residues coordinate Mg(2+): asparagine 121 and glutamate 124. Glutamate 124 is an active-site residue. The region spanning 160 to 229 is the DRBM domain; that stretch reads NPKNRLQQFT…AKQALSTHDD (70 aa).

Belongs to the ribonuclease III family. Homodimer. Mg(2+) serves as cofactor.

Its subcellular location is the cytoplasm. The catalysed reaction is Endonucleolytic cleavage to 5'-phosphomonoester.. Functionally, digests double-stranded RNA. Involved in the processing of primary rRNA transcript to yield the immediate precursors to the large and small rRNAs (23S and 16S). Processes some mRNAs, and tRNAs when they are encoded in the rRNA operon. Processes pre-crRNA and tracrRNA of type II CRISPR loci if present in the organism. The chain is Ribonuclease 3 from Chlamydia muridarum (strain MoPn / Nigg).